The following is a 1254-amino-acid chain: Juxtamembrane domain-associated catenin (1254 aa).

Disordered regions lie at residues 1-38 (MISS…TMRK), 84-106 (AGPT…DNPP), and 145-209 (PYSN…SAPG). Positions 12–22 (PIPEEGTEADG) are enriched in acidic residues. Residues 145–157 (PYSNIDFDSSGLP) show a composition bias toward polar residues. Fibronectin type-III domains lie at 207 to 302 (APGV…IPIS), 315 to 411 (APGR…IRPA), 428 to 518 (PPGQ…LRPT), and 530 to 624 (ILEA…IEPS). The interval 412–433 (APQRHVPARKVSESVQPPGQPQ) is disordered. The segment at 662–685 (MVRESPPLPERDDSPPPLRRANNN) is disordered. ARM repeat units lie at residues 733 to 775 (GGIP…AVME), 777 to 820 (DGVR…ESAT), 874 to 922 (NLIE…YDPA), 969 to 1012 (HVVK…RAAV), and 1016 to 1058 (KGLP…KYAL). Positions 920–960 (DPAAAHSSSSKNMKHVASPKPEKKKKDKEKKKDKNPKNIVT) are disordered. The tract at residues 1159 to 1254 (GTARRGDSST…GGGNIDDSWV (96 aa)) is disordered. The span at 1166 to 1176 (SSTLARPISSQ) shows a compositional bias: polar residues. A compositionally biased stretch (basic and acidic residues) spans 1177–1187 (GRERPSMHQLD).

This sequence belongs to the beta-catenin family. Associated with the catenin-cadherin complex consisting of hmr-1, hmp-1 and hmp-2. Interacts with hmr-1. Interacts with picc-1. Epidermal cells.

Its subcellular location is the cell junction. The protein resides in the adherens junction. It localises to the nucleus. Its function is as follows. May act as a positive modulator of hmr-1 function during epidermal morphogenesis. Required for proper localization of other junctional components, such as pac-1. This chain is Juxtamembrane domain-associated catenin (jac-1), found in Caenorhabditis elegans.